A 112-amino-acid chain; its full sequence is Ribosome-binding factor A (112 aa).

It belongs to the RbfA family. In terms of assembly, monomer. Binds 30S ribosomal subunits, but not 50S ribosomal subunits or 70S ribosomes.

The protein localises to the cytoplasm. One of several proteins that assist in the late maturation steps of the functional core of the 30S ribosomal subunit. Associates with free 30S ribosomal subunits (but not with 30S subunits that are part of 70S ribosomes or polysomes). Required for efficient processing of 16S rRNA. May interact with the 5'-terminal helix region of 16S rRNA. This chain is Ribosome-binding factor A, found in Ruthia magnifica subsp. Calyptogena magnifica.